Consider the following 234-residue polypeptide: Purine nucleoside phosphorylase DeoD-type (234 aa).

Residue histidine 5 coordinates a purine D-ribonucleoside. Phosphate is bound by residues glycine 21, arginine 25, arginine 44, and 88 to 91; that span reads RIGT. A purine D-ribonucleoside contacts are provided by residues 180–182 and 204–205; these read DME and SD. Aspartate 205 serves as the catalytic Proton donor.

Belongs to the PNP/UDP phosphorylase family. Homohexamer; trimer of homodimers.

The enzyme catalyses a purine D-ribonucleoside + phosphate = a purine nucleobase + alpha-D-ribose 1-phosphate. It catalyses the reaction a purine 2'-deoxy-D-ribonucleoside + phosphate = a purine nucleobase + 2-deoxy-alpha-D-ribose 1-phosphate. In terms of biological role, catalyzes the reversible phosphorolytic breakdown of the N-glycosidic bond in the beta-(deoxy)ribonucleoside molecules, with the formation of the corresponding free purine bases and pentose-1-phosphate. In Buchnera aphidicola subsp. Acyrthosiphon pisum (strain 5A), this protein is Purine nucleoside phosphorylase DeoD-type.